Here is a 487-residue protein sequence, read N- to C-terminus: Adenosylhomocysteinase (487 aa).

Substrate-binding residues include Thr76, Asp151, and Glu212. 213–215 is a binding site for NAD(+); the sequence is TTT. Lys242 and Asp246 together coordinate substrate. NAD(+)-binding positions include Asn247, 276–281, Glu299, Asn334, 355–357, and Asn403; these read GYGDVG and IGH.

It belongs to the adenosylhomocysteinase family. NAD(+) is required as a cofactor.

Its subcellular location is the cytoplasm. It carries out the reaction S-adenosyl-L-homocysteine + H2O = L-homocysteine + adenosine. The protein operates within amino-acid biosynthesis; L-homocysteine biosynthesis; L-homocysteine from S-adenosyl-L-homocysteine: step 1/1. Its function is as follows. May play a key role in the regulation of the intracellular concentration of adenosylhomocysteine. This is Adenosylhomocysteinase from Bacteroides fragilis (strain YCH46).